The sequence spans 834 residues: Unextended protein (834 aa).

The N-terminal stretch at 1–20 (MNTYFISFITIIIFANGING) is a signal peptide. Residues 21-182 (TSVDTSNKLL…DFLKIKTFEP (162 aa)) are Extracellular-facing. N-linked (GlcNAc...) asparagine glycosylation is found at N38, N42, and N156. The CNNM transmembrane domain maps to 182–361 (PLIPVWLAII…NDVNDLDKNE (180 aa)). Residues 183–203 (LIPVWLAIIIIVTCLGFSALF) traverse the membrane as a helical segment. The Cytoplasmic portion of the chain corresponds to 204 to 244 (SGLNLGLMSMDRTELKILRNTGTEKEKKYASKIAPVRDQGN). Residues 245–265 (YLLCSILLGNVLVNSTFTILL) traverse the membrane as a helical segment. Over 266–267 (DG) the chain is Extracellular. The helical transmembrane segment at 268–288 (LTSGLFAVIFSTLAIVLFGEI) threads the bilayer. Over 289–298 (TPQAVCSRHG) the chain is Cytoplasmic. The helical transmembrane segment at 299–319 (LAIGAKTILVTKTVMAITAPL) threads the bilayer. At 320–834 (SYPVSRILDK…DKFESKQSKP (515 aa)) the chain is on the extracellular side. CBS domains lie at 380–441 (MTHI…NTPL) and 448–515 (YQNP…IVDE). A glycan (N-linked (GlcNAc...) asparagine) is linked at N522. Residue 604 to 656 (YIFTQGKAVDFFVLILEGRVEVTIGKEALMFESGPFTYFGTQALVPNVVIDSP) coordinates a nucleoside 3',5'-cyclic phosphate. The disordered stretch occupies residues 739 to 765 (CFAQNQSTRRLSNRSINSSPTNMNRSP). Polar residues predominate over residues 740-763 (FAQNQSTRRLSNRSINSSPTNMNR). N-linked (GlcNAc...) asparagine glycosylation is found at N743, N751, and N790. Residues 807-834 (SGEQDTTAASMPLLPKLDDKFESKQSKP) are disordered. The span at 822–834 (KLDDKFESKQSKP) shows a compositional bias: basic and acidic residues.

Belongs to the ACDP family. As to quaternary structure, interacts with PRL-1, possibly at the plasma membrane.

The protein resides in the cell membrane. Probable metal transporter. Acts downstream of PRL-1 and protects the nervous system against olfactory carbon dioxide stimulation. The chain is Unextended protein from Drosophila melanogaster (Fruit fly).